Here is a 378-residue protein sequence, read N- to C-terminus: Homoserine O-acetyltransferase (378 aa).

In terms of domain architecture, AB hydrolase-1 spans 54–355; the sequence is NAILVCHALS…NNPAGHDSFL (302 aa). The Nucleophile role is filled by serine 159. Arginine 228 serves as a coordination point for substrate. Active-site residues include aspartate 318 and histidine 351. Substrate is bound at residue aspartate 352.

The protein belongs to the AB hydrolase superfamily. MetX family. In terms of assembly, homodimer.

The protein localises to the cytoplasm. It catalyses the reaction L-homoserine + acetyl-CoA = O-acetyl-L-homoserine + CoA. It participates in amino-acid biosynthesis; L-methionine biosynthesis via de novo pathway; O-acetyl-L-homoserine from L-homoserine: step 1/1. Its function is as follows. Transfers an acetyl group from acetyl-CoA to L-homoserine, forming acetyl-L-homoserine. This is Homoserine O-acetyltransferase from Leptospira biflexa serovar Patoc (strain Patoc 1 / Ames).